The sequence spans 449 residues: F-box/LRR-repeat protein At3g60040 (449 aa).

Residues 12–64 (RDAISWLPDEVLGKILSLIPTKQAVSTSLLAKKWRTIFRLVDHLELDDSFSLQ) form the F-box domain. LRR repeat units follow at residues 161 to 188 (LTLG…FIDT), 191 to 215 (FYDI…SVHH), 216 to 237 (HDFI…SVDY), 239 to 263 (CPDD…EYSH), 287 to 312 (ERKV…HLSP), and 340 to 365 (KNKR…IVKD).

The chain is F-box/LRR-repeat protein At3g60040 from Arabidopsis thaliana (Mouse-ear cress).